Consider the following 171-residue polypeptide: Adenine phosphoribosyltransferase (171 aa).

It belongs to the purine/pyrimidine phosphoribosyltransferase family. As to quaternary structure, homodimer.

It is found in the cytoplasm. It catalyses the reaction AMP + diphosphate = 5-phospho-alpha-D-ribose 1-diphosphate + adenine. It participates in purine metabolism; AMP biosynthesis via salvage pathway; AMP from adenine: step 1/1. Catalyzes a salvage reaction resulting in the formation of AMP, that is energically less costly than de novo synthesis. This Acidiphilium cryptum (strain JF-5) protein is Adenine phosphoribosyltransferase.